A 374-amino-acid chain; its full sequence is Chaperone protein DnaJ (374 aa).

In terms of domain architecture, J spans 4–69; the sequence is SYYEILEITQ…EKRAIYDRYG (66 aa). A CR-type zinc finger spans residues 136–213; that stretch reads GCKKNIDFTY…CKGLGYNESK (78 aa). The Zn(2+) site is built by Cys149, Cys152, Cys165, Cys168, Cys187, Cys190, Cys201, and Cys204. 4 CXXCXGXG motif repeats span residues 149–156, 165–172, 187–194, and 201–208; these read CKTCNGTG, CPKCQGRG, CPDCQGSG, and CNDCKGLG.

The protein belongs to the DnaJ family. In terms of assembly, homodimer. The cofactor is Zn(2+).

It localises to the cytoplasm. Participates actively in the response to hyperosmotic and heat shock by preventing the aggregation of stress-denatured proteins and by disaggregating proteins, also in an autonomous, DnaK-independent fashion. Unfolded proteins bind initially to DnaJ; upon interaction with the DnaJ-bound protein, DnaK hydrolyzes its bound ATP, resulting in the formation of a stable complex. GrpE releases ADP from DnaK; ATP binding to DnaK triggers the release of the substrate protein, thus completing the reaction cycle. Several rounds of ATP-dependent interactions between DnaJ, DnaK and GrpE are required for fully efficient folding. Also involved, together with DnaK and GrpE, in the DNA replication of plasmids through activation of initiation proteins. The chain is Chaperone protein DnaJ from Campylobacter jejuni subsp. doylei (strain ATCC BAA-1458 / RM4099 / 269.97).